Here is a 617-residue protein sequence, read N- to C-terminus: Chaperone protein DnaK (617 aa).

The disordered stretch occupies residues 579–617 (KAQQEAQQASGEAGSADARGPDETVVDADYEVVDDEKRK). A compositionally biased stretch (low complexity) spans 580 to 594 (AQQEAQQASGEAGSA). Residues 602-617 (TVVDADYEVVDDEKRK) show a composition bias toward acidic residues.

Belongs to the heat shock protein 70 family.

In terms of biological role, acts as a chaperone. This is Chaperone protein DnaK from Methanosarcina acetivorans (strain ATCC 35395 / DSM 2834 / JCM 12185 / C2A).